Here is a 49-residue protein sequence, read N- to C-terminus: Large ribosomal subunit protein bL33C (49 aa).

Residues 21–49 (KNKRNNPDRVEFKKYCPRDKKSTLHRETK) are disordered. Basic and acidic residues predominate over residues 25–49 (NNPDRVEFKKYCPRDKKSTLHRETK).

This sequence belongs to the bacterial ribosomal protein bL33 family.

The sequence is that of Large ribosomal subunit protein bL33C from Bacillus licheniformis (strain ATCC 14580 / DSM 13 / JCM 2505 / CCUG 7422 / NBRC 12200 / NCIMB 9375 / NCTC 10341 / NRRL NRS-1264 / Gibson 46).